Consider the following 175-residue polypeptide: Transcriptional repressor NrdR (175 aa).

A zinc finger lies at 3–34 (CPICQDTNSRVLESRSAESGKSIRRRRECMNC). The ATP-cone domain maps to 49 to 139 (ITIIKRDGKK…VYRKFQGIRD (91 aa)).

Belongs to the NrdR family. Zn(2+) serves as cofactor.

Functionally, negatively regulates transcription of bacterial ribonucleotide reductase nrd genes and operons by binding to NrdR-boxes. This Trichodesmium erythraeum (strain IMS101) protein is Transcriptional repressor NrdR.